The primary structure comprises 931 residues: Isoleucine--tRNA ligase (931 aa).

The short motif at Pro57 to His67 is the 'HIGH' region element. Glu556 contacts L-isoleucyl-5'-AMP. Positions Lys597 to Ser601 match the 'KMSKS' region motif. An ATP-binding site is contributed by Lys600. Residues Cys890, Cys893, Cys910, and Cys913 each coordinate Zn(2+).

The protein belongs to the class-I aminoacyl-tRNA synthetase family. IleS type 1 subfamily. In terms of assembly, monomer. Zn(2+) is required as a cofactor.

Its subcellular location is the cytoplasm. The enzyme catalyses tRNA(Ile) + L-isoleucine + ATP = L-isoleucyl-tRNA(Ile) + AMP + diphosphate. Catalyzes the attachment of isoleucine to tRNA(Ile). As IleRS can inadvertently accommodate and process structurally similar amino acids such as valine, to avoid such errors it has two additional distinct tRNA(Ile)-dependent editing activities. One activity is designated as 'pretransfer' editing and involves the hydrolysis of activated Val-AMP. The other activity is designated 'posttransfer' editing and involves deacylation of mischarged Val-tRNA(Ile). The chain is Isoleucine--tRNA ligase from Lactobacillus delbrueckii subsp. bulgaricus (strain ATCC 11842 / DSM 20081 / BCRC 10696 / JCM 1002 / NBRC 13953 / NCIMB 11778 / NCTC 12712 / WDCM 00102 / Lb 14).